We begin with the raw amino-acid sequence, 385 residues long: Zinc finger protein B385R (385 aa).

A C2H2-type zinc finger spans residues Leu-166–His-190.

Belongs to the asfivirus B385R family.

This is Zinc finger protein B385R from Ornithodoros (relapsing fever ticks).